The primary structure comprises 107 residues: Translation initiation factor IF-1, chloroplastic (107 aa).

One can recognise an S1-like domain in the interval 8–83; it reads REKKNPREAK…SKGRIIYRLP (76 aa).

Belongs to the IF-1 family. As to quaternary structure, component of the 30S ribosomal translation pre-initiation complex which assembles on the 30S ribosome in the order IF-2 and IF-3, IF-1 and N-formylmethionyl-tRNA(fMet); mRNA recruitment can occur at any time during PIC assembly.

It is found in the plastid. It localises to the chloroplast. In terms of biological role, one of the essential components for the initiation of protein synthesis. Stabilizes the binding of IF-2 and IF-3 on the 30S subunit to which N-formylmethionyl-tRNA(fMet) subsequently binds. Helps modulate mRNA selection, yielding the 30S pre-initiation complex (PIC). Upon addition of the 50S ribosomal subunit IF-1, IF-2 and IF-3 are released leaving the mature 70S translation initiation complex. This chain is Translation initiation factor IF-1, chloroplastic, found in Lolium perenne (Perennial ryegrass).